A 96-amino-acid polypeptide reads, in one-letter code: Co-chaperonin GroES (96 aa).

Belongs to the GroES chaperonin family. As to quaternary structure, heptamer of 7 subunits arranged in a ring. Interacts with the chaperonin GroEL.

It is found in the cytoplasm. Together with the chaperonin GroEL, plays an essential role in assisting protein folding. The GroEL-GroES system forms a nano-cage that allows encapsulation of the non-native substrate proteins and provides a physical environment optimized to promote and accelerate protein folding. GroES binds to the apical surface of the GroEL ring, thereby capping the opening of the GroEL channel. The protein is Co-chaperonin GroES of Actinobacillus pleuropneumoniae serotype 3 (strain JL03).